The primary structure comprises 173 residues: MARVEL domain-containing protein 1 (173 aa).

M1 carries the N-acetylmethionine modification. The Cytoplasmic segment spans residues 1–29; sequence MLPPPPRQPPPQARAARGAVRLQRPFLRS. In terms of domain architecture, MARVEL spans 26 to 166; sequence FLRSPLGVLR…SALYGCGRRC (141 aa). Residues 30 to 50 traverse the membrane as a helical segment; it reads PLGVLRLLQLLAGAAFWITIA. At 51-59 the chain is on the extracellular side; the sequence is TSKYQGPVH. Residues 60–80 traverse the membrane as a helical segment; it reads FALFVSVLFWLLTLGLYFLTL. At 81–94 the chain is on the cytoplasmic side; sequence LGKHELVPVLGSRW. Residues 95–115 traverse the membrane as a helical segment; the sequence is LMVNVAHDVLAAALYGAATGI. Topologically, residues 116 to 138 are extracellular; it reads MSDQMQRHSYCNLKDYPLPCAYH. Residues 139-159 form a helical membrane-spanning segment; the sequence is AFLAAAVCGGVCHGLYLLSAL. At 160-173 the chain is on the cytoplasmic side; it reads YGCGRRCQGKQEVA.

As to expression, widely expressed in normal tissues. Down-regulated in multiple primary tumors.

The protein resides in the cell membrane. It localises to the cytoplasm. The protein localises to the cytoskeleton. It is found in the nucleus. Functionally, microtubule-associated protein that exhibits cell cycle-dependent localization and can inhibit cell proliferation and migration. The protein is MARVEL domain-containing protein 1 (MARVELD1) of Homo sapiens (Human).